The chain runs to 93 residues: YcgL domain-containing protein PSHAb0508 (93 aa).

Residues 1–85 enclose the YcgL domain; the sequence is MLTAVYKSKK…PQENLLSQLR (85 aa).

The polypeptide is YcgL domain-containing protein PSHAb0508 (Pseudoalteromonas translucida (strain TAC 125)).